Reading from the N-terminus, the 953-residue chain is Atromentin synthetase invA5 (953 aa).

An adenylation (A) domain region spans residues 37–460; sequence SRAVSQYPDH…SGRIKDTVIV (424 aa). Residues 592 to 670 form the Carrier domain; the sequence is APSTETEKTL…SLAKYVDSLI (79 aa). A thiolation and peptide carrier (T) domain region spans residues 597-667; that stretch reads TEKTLAGIYA…VISSLAKYVD (71 aa). O-(pantetheine 4'-phosphoryl)serine is present on serine 629. The thioesterase (TE) domain stretch occupies residues 693-795; sequence PIFMVHPGVG…FTGLINIPPN (103 aa).

It belongs to the ATP-dependent AMP-binding enzyme family.

The protein operates within secondary metabolite biosynthesis. An L-tyrosine:2-oxoglutarate aminotransferase (probably invD) and atromentin synthetase invA5 catalyze consecutive steps to turn over L-tyrosine into atromentin, which represents the generic precursor molecule for the entire terphenylquinone and pulvinic acid family of pigments, which are widely distributed secondary metabolites in homobasidiomycetes. The first step catalyzed by the aminotransferase converts L-tyrosine in to 4-hydroxyphenylpyruvate (4-HPP). Adenylation of two 4-HPP monomers by the invA5 adenylation (A) domain, covalent tethering of the monomers as a thioester and oxoester onto the invA5 thiolation (T) and thioesterase (TE) domains, respectively, and symmetric C-C-bond formation between two monomers catalyzed by the invA5 TE domain leads to atromentin. The chain is Atromentin synthetase invA5 (invA5) from Paxillus involutus (Naked brimcap).